The following is a 480-amino-acid chain: CASP8 and FADD-like apoptosis regulator (480 aa).

DED domains are found at residues 1-73 (MSAE…RILK) and 92-170 (DYRV…KIQK). Residues 1–195 (MSAEVIHQVE…LQAAIQKSFK (195 aa)) are interaction with CASP8. Residues 1–227 (MSAEVIHQVE…GTQQEPVKKS (227 aa)) are interaction with FADD. An interaction with CASP8 propeptide region spans residues 1-305 (MSAEVIHQVE…FACMPEHRDY (305 aa)). The segment at 1 to 435 (MSAEVIHQVE…CLSQKLRQER (435 aa)) is not proteolytically processed and involved in apoptosis inhibition. An interaction with CASP3 region spans residues 192–435 (KSFKDPSNNF…CLSQKLRQER (244 aa)). Residues 192-480 (KSFKDPSNNF…LRKKLIPSYT (289 aa)) form an interaction with TRAF1 and TRAF2 region. The segment at 217–480 (LGTQQEPVKK…LRKKLIPSYT (264 aa)) is interaction with CASP8 subunits p18 and p10. A caspase region spans residues 263-358 (ETELLRDTFT…AGKPKIFFIQ (96 aa)). Residues 370–480 (SSLLEVDGPA…LRKKLIPSYT (111 aa)) form an interaction with CASP8 region.

Belongs to the peptidase C14A family. TNFRSF6 stimulation triggers recruitment to the death-inducing signaling complex (DISC) formed by TNFRSF6, FADD and CASP8. A proteolytic fragment (p43) stays associated with the DISC. Interacts with RIPK1. In terms of processing, proteolytically processed by CASP8 generating subunit p43 and p12.

In terms of biological role, apoptosis regulator protein which may function as a crucial link between cell survival and cell death pathways in mammalian cells. Acts as an inhibitor of TNFRSF6 mediated apoptosis. A proteolytic fragment (p43) is likely retained in the death-inducing signaling complex (DISC) thereby blocking further recruitment and processing of caspase-8 at the complex. Full length and shorter isoforms have been shown either to induce apoptosis or to reduce TNFRSF-triggered apoptosis. Lacks enzymatic (caspase) activity. The chain is CASP8 and FADD-like apoptosis regulator (CFLAR) from Pongo abelii (Sumatran orangutan).